We begin with the raw amino-acid sequence, 217 residues long: Guanylate kinase (217 aa).

Residues 1 to 10 (MAVSSTTLSS) show a composition bias toward low complexity. Residues 1–30 (MAVSSTTLSSPTPPECLQQQEAPRPPATRG) are disordered. Positions 30–208 (GRLVVLTGPS…ALQELEALLY (179 aa)) constitute a Guanylate kinase-like domain. Position 37–44 (37–44 (GPSGVGKG)) interacts with ATP.

The protein belongs to the guanylate kinase family.

Its subcellular location is the cytoplasm. It carries out the reaction GMP + ATP = GDP + ADP. The enzyme catalyses dZMP + ATP = dZDP + ADP. It participates in purine metabolism. In terms of biological role, essential for recycling GMP and indirectly, cGMP. Its function is as follows. (Microbial infection) Catalyzes the phosphorylation of dZMP to dZDP, when the bacterium is infected by a phage that produces the substrate for the synthesis of dZTP (2- amino-2'-deoxyadenosine 5'-triphosphate), which is then used by the phage as a DNA polymerase substrate. The protein is Guanylate kinase of Synechococcus sp. (strain JA-3-3Ab) (Cyanobacteria bacterium Yellowstone A-Prime).